The primary structure comprises 215 residues: Pyrrolidone-carboxylate peptidase (215 aa).

Residues glutamate 81, cysteine 144, and histidine 168 contribute to the active site.

This sequence belongs to the peptidase C15 family. As to quaternary structure, homotetramer.

The protein localises to the cytoplasm. It catalyses the reaction Release of an N-terminal pyroglutamyl group from a polypeptide, the second amino acid generally not being Pro.. Functionally, removes 5-oxoproline from various penultimate amino acid residues except L-proline. The chain is Pyrrolidone-carboxylate peptidase (pcp) from Bacillus subtilis (strain 168).